The sequence spans 445 residues: Argininosuccinate synthase (445 aa).

Residues 17 to 25 (AFSGGLDTS) and Ala43 each bind ATP. Tyr99 contributes to the L-citrulline binding site. ATP-binding residues include Gly129 and Thr131. L-aspartate contacts are provided by Thr131, Asn135, and Asp136. Asn135 contacts L-citrulline. Asp136 lines the ATP pocket. Positions 139 and 192 each coordinate L-citrulline. Residue Asp194 participates in ATP binding. The L-citrulline site is built by Thr201, Glu203, and Glu280.

Belongs to the argininosuccinate synthase family. Type 2 subfamily. Homotetramer.

Its subcellular location is the cytoplasm. It carries out the reaction L-citrulline + L-aspartate + ATP = 2-(N(omega)-L-arginino)succinate + AMP + diphosphate + H(+). Its pathway is amino-acid biosynthesis; L-arginine biosynthesis; L-arginine from L-ornithine and carbamoyl phosphate: step 2/3. The protein is Argininosuccinate synthase of Burkholderia cenocepacia (strain ATCC BAA-245 / DSM 16553 / LMG 16656 / NCTC 13227 / J2315 / CF5610) (Burkholderia cepacia (strain J2315)).